We begin with the raw amino-acid sequence, 465 residues long: Siroheme synthase (465 aa).

The precorrin-2 dehydrogenase /sirohydrochlorin ferrochelatase stretch occupies residues 1–203; it reads MDFLPLFHSL…GRPAEAERLL (203 aa). NAD(+)-binding positions include 22–23 and 43–44; these read EV and PQ. The residue at position 128 (serine 128) is a Phosphoserine. Residues 217–465 are uroporphyrinogen-III C-methyltransferase; sequence GEVYLVGAGP…AWFEGAREDA (249 aa). Proline 226 is an S-adenosyl-L-methionine binding site. The active-site Proton acceptor is the aspartate 249. Lysine 271 (proton donor) is an active-site residue. S-adenosyl-L-methionine contacts are provided by residues 302-304, isoleucine 307, 332-333, methionine 384, and glycine 413; these read GGD and TA.

This sequence in the N-terminal section; belongs to the precorrin-2 dehydrogenase / sirohydrochlorin ferrochelatase family. It in the C-terminal section; belongs to the precorrin methyltransferase family.

It carries out the reaction uroporphyrinogen III + 2 S-adenosyl-L-methionine = precorrin-2 + 2 S-adenosyl-L-homocysteine + H(+). It catalyses the reaction precorrin-2 + NAD(+) = sirohydrochlorin + NADH + 2 H(+). The enzyme catalyses siroheme + 2 H(+) = sirohydrochlorin + Fe(2+). It functions in the pathway cofactor biosynthesis; adenosylcobalamin biosynthesis; precorrin-2 from uroporphyrinogen III: step 1/1. It participates in cofactor biosynthesis; adenosylcobalamin biosynthesis; sirohydrochlorin from precorrin-2: step 1/1. Its pathway is porphyrin-containing compound metabolism; siroheme biosynthesis; precorrin-2 from uroporphyrinogen III: step 1/1. The protein operates within porphyrin-containing compound metabolism; siroheme biosynthesis; siroheme from sirohydrochlorin: step 1/1. It functions in the pathway porphyrin-containing compound metabolism; siroheme biosynthesis; sirohydrochlorin from precorrin-2: step 1/1. Functionally, multifunctional enzyme that catalyzes the SAM-dependent methylations of uroporphyrinogen III at position C-2 and C-7 to form precorrin-2 via precorrin-1. Then it catalyzes the NAD-dependent ring dehydrogenation of precorrin-2 to yield sirohydrochlorin. Finally, it catalyzes the ferrochelation of sirohydrochlorin to yield siroheme. This Pseudomonas aeruginosa (strain ATCC 15692 / DSM 22644 / CIP 104116 / JCM 14847 / LMG 12228 / 1C / PRS 101 / PAO1) protein is Siroheme synthase.